Reading from the N-terminus, the 310-residue chain is Quinolinate synthase (310 aa).

Positions 27 and 44 each coordinate iminosuccinate. [4Fe-4S] cluster is bound at residue Cys89. Iminosuccinate-binding positions include 115-117 (YVN) and Ser132. Cys175 is a [4Fe-4S] cluster binding site. Iminosuccinate contacts are provided by residues 201–203 (HPE) and Thr222. [4Fe-4S] cluster is bound at residue Cys267.

Belongs to the quinolinate synthase family. Type 2 subfamily. [4Fe-4S] cluster is required as a cofactor.

Its subcellular location is the cytoplasm. The enzyme catalyses iminosuccinate + dihydroxyacetone phosphate = quinolinate + phosphate + 2 H2O + H(+). It participates in cofactor biosynthesis; NAD(+) biosynthesis; quinolinate from iminoaspartate: step 1/1. Functionally, catalyzes the condensation of iminoaspartate with dihydroxyacetone phosphate to form quinolinate. This is Quinolinate synthase from Thermus thermophilus (strain ATCC BAA-163 / DSM 7039 / HB27).